The primary structure comprises 92 residues: Ribonuclease P protein component 1 (92 aa).

This sequence belongs to the eukaryotic/archaeal RNase P protein component 1 family. Consists of a catalytic RNA component and at least 4-5 protein subunits.

It is found in the cytoplasm. The enzyme catalyses Endonucleolytic cleavage of RNA, removing 5'-extranucleotides from tRNA precursor.. Functionally, part of ribonuclease P, a protein complex that generates mature tRNA molecules by cleaving their 5'-ends. This Staphylothermus marinus (strain ATCC 43588 / DSM 3639 / JCM 9404 / F1) protein is Ribonuclease P protein component 1.